Here is a 267-residue protein sequence, read N- to C-terminus: MSYFEAFVLALIQGLTEFLPISSSAHLILPSAILGWEDQGLAFDVAVHVGTLAAVVIYFRKEVITLFAALFASIFKGERSKEAKLAWMIVIATIPACIFGLVMKDVIEVYLRSAYVIATTTIIFGLLLWWVDKNASLLDDEYQAGWKKALFIGIAQALAMIPGTSRSGATITAALYLGFTREAAARFSFLMSIPIITLAGSYLGLKLVTSGEPVHVGFLLTGIVTSFISAYLCIHLFLKMISRMGMTPFVIYRLILGVGLFAYLLMA.

8 helical membrane passes run 1-21, 39-59, 83-103, 111-131, 144-164, 189-209, 218-238, and 246-266; these read MSYF…FLPI, QGLA…VIYF, AKLA…GLVM, LRSA…LWWV, AGWK…IPGT, FLMS…KLVT, FLLT…HLFL, and MTPF…YLLM.

This sequence belongs to the UppP family.

The protein localises to the cell inner membrane. The enzyme catalyses di-trans,octa-cis-undecaprenyl diphosphate + H2O = di-trans,octa-cis-undecaprenyl phosphate + phosphate + H(+). Catalyzes the dephosphorylation of undecaprenyl diphosphate (UPP). Confers resistance to bacitracin. This is Undecaprenyl-diphosphatase from Vibrio vulnificus (strain CMCP6).